Consider the following 84-residue polypeptide: Small ribosomal subunit protein bS16 (84 aa).

It belongs to the bacterial ribosomal protein bS16 family.

The polypeptide is Small ribosomal subunit protein bS16 (Paraburkholderia phymatum (strain DSM 17167 / CIP 108236 / LMG 21445 / STM815) (Burkholderia phymatum)).